We begin with the raw amino-acid sequence, 236 residues long: 2-C-methyl-D-erythritol 4-phosphate cytidylyltransferase (236 aa).

It belongs to the IspD/TarI cytidylyltransferase family. IspD subfamily.

It carries out the reaction 2-C-methyl-D-erythritol 4-phosphate + CTP + H(+) = 4-CDP-2-C-methyl-D-erythritol + diphosphate. It functions in the pathway isoprenoid biosynthesis; isopentenyl diphosphate biosynthesis via DXP pathway; isopentenyl diphosphate from 1-deoxy-D-xylulose 5-phosphate: step 2/6. Functionally, catalyzes the formation of 4-diphosphocytidyl-2-C-methyl-D-erythritol from CTP and 2-C-methyl-D-erythritol 4-phosphate (MEP). The polypeptide is 2-C-methyl-D-erythritol 4-phosphate cytidylyltransferase (Pseudomonas savastanoi pv. phaseolicola (strain 1448A / Race 6) (Pseudomonas syringae pv. phaseolicola (strain 1448A / Race 6))).